The sequence spans 46 residues: U2-plectoxin-Pt1a (46 aa).

In terms of processing, contains 4 disulfide bonds. Expressed by the venom gland.

Its subcellular location is the secreted. In terms of biological role, potent toxin that may paralyze and/or kill insect pests such as H.virescens (lepidoptera), S.exigua (beet armyworm) and M.sexta (tobacco hornworm). This is U2-plectoxin-Pt1a from Plectreurys tristis (Spider).